A 96-amino-acid polypeptide reads, in one-letter code: Cytoplasmic envelopment protein 3 (96 aa).

Gly-2 carries N-myristoyl glycine; by host lipidation. The Di-leucine-like internalization motif signature appears at 18-19; the sequence is LI. Positions 37-43 are asp/Glu-rich (acidic); that stretch reads DIESEEE. Residue Ser-40 is modified to Phosphoserine. A disordered region spans residues 44–96; that stretch reads GNFYVPPDMRGVTRAPGRQRLRSSDPPSRHTHRRTPGGACPATQFPPPMSDSE. Over residues 87 to 96 the composition is skewed to pro residues; that stretch reads QFPPPMSDSE.

It belongs to the herpesviridae cytoplasmic envelopment protein 3 family. In terms of assembly, interacts with cytoplasmic envelopment protein 2; this interaction is essential for the proper localization of each protein to the assembly complex and thus for the production of infectious virus. Interacts with gE (via C-terminus). Interacts with gD (via C-terminus). Interacts with UL56. Myristoylation and palmitoylation (probably on one or more of the nearby cysteines at the N-terminus) enable membrane-binding and Golgi apparatus-specific targeting and are essential for efficient packaging. Post-translationally, phosphorylated. Phosphorylation does not seem to be required for recycling to the host Golgi apparatus. Packaging is selective for underphosphorylated forms.

It is found in the virion tegument. Its subcellular location is the virion membrane. It localises to the host cell membrane. The protein localises to the host Golgi apparatus membrane. In terms of biological role, plays an important role in the cytoplasmic envelopment of tegument proteins and capsids during the assembly and egress processes. Also participates in viral entry at the fusion step probably by regulating the core fusion machinery. The sequence is that of Cytoplasmic envelopment protein 3 from Homo sapiens (Human).